Consider the following 901-residue polypeptide: Viral-enhancing factor (901 aa).

Positions 27-330 (HRRTEVGVVL…IFTWLYNPQR (304 aa)) constitute a Peptidase M60 domain. Asn-265, Asn-278, Asn-339, Asn-349, Asn-540, Asn-594, Asn-595, Asn-642, Asn-683, and Asn-698 each carry an N-linked (GlcNAc...) asparagine; by host glycan.

Involved in disruption of the peritrophic membrane and fusion of nucleocapsids with midgut cells. This chain is Viral-enhancing factor (VEF), found in Pseudalatia unipuncta granulosis virus (PuGV).